The following is a 52-amino-acid chain: MLHYAIIFFVIAIIAAVLGFSGIAGAATNIAWILFVVFLILAVISMFRRGKV.

2 helical membrane passes run 5–25 (AIIF…GIAG) and 27–47 (ATNI…ISMF).

This sequence belongs to the UPF0391 family.

Its subcellular location is the cell membrane. This Xanthomonas euvesicatoria pv. vesicatoria (strain 85-10) (Xanthomonas campestris pv. vesicatoria) protein is UPF0391 membrane protein XCV0245.